Reading from the N-terminus, the 131-residue chain is uncharacterized protein (131 aa).

A disordered region spans residues 112 to 131 (LTDNPGAVRKSQKSLIPPYN).

This is an uncharacterized protein from Fowl adenovirus A serotype 1 (strain CELO / Phelps) (FAdV-1).